Consider the following 315-residue polypeptide: Ribose-phosphate pyrophosphokinase (315 aa).

Residues Asp40–Glu42 and Arg99–Gln100 contribute to the ATP site. 2 residues coordinate Mg(2+): His133 and Asp175. The active site involves Lys198. D-ribose 5-phosphate contacts are provided by residues Arg200, Asp224, and Asp228 to Ser232.

Belongs to the ribose-phosphate pyrophosphokinase family. Class I subfamily. Homohexamer. Mg(2+) is required as a cofactor.

The protein resides in the cytoplasm. It carries out the reaction D-ribose 5-phosphate + ATP = 5-phospho-alpha-D-ribose 1-diphosphate + AMP + H(+). It functions in the pathway metabolic intermediate biosynthesis; 5-phospho-alpha-D-ribose 1-diphosphate biosynthesis; 5-phospho-alpha-D-ribose 1-diphosphate from D-ribose 5-phosphate (route I): step 1/1. In terms of biological role, involved in the biosynthesis of the central metabolite phospho-alpha-D-ribosyl-1-pyrophosphate (PRPP) via the transfer of pyrophosphoryl group from ATP to 1-hydroxyl of ribose-5-phosphate (Rib-5-P). In Thermotoga maritima (strain ATCC 43589 / DSM 3109 / JCM 10099 / NBRC 100826 / MSB8), this protein is Ribose-phosphate pyrophosphokinase.